A 284-amino-acid chain; its full sequence is Syntaxin-like protein psy1 (284 aa).

Residues 23-57 (EEIDHIRDAIRQIEDNVGRIEMLHQQSLQEIDEAN) are a coiled coil. The t-SNARE coiled-coil homology domain occupies 181–243 (LREVQERHAD…GEGTQHMDRA (63 aa)). A helical; Anchor for type IV membrane protein membrane pass occupies residues 260-280 (ICVVIICVIVAVLCGVLIPVL).

Belongs to the syntaxin family.

Its subcellular location is the cell membrane. The protein resides in the prospore membrane. This chain is Syntaxin-like protein psy1 (psy1), found in Schizosaccharomyces pombe (strain 972 / ATCC 24843) (Fission yeast).